The sequence spans 87 residues: Small ribosomal subunit protein uS15c (87 aa).

This sequence belongs to the universal ribosomal protein uS15 family. Part of the 30S ribosomal subunit.

Its subcellular location is the plastid. It localises to the chloroplast. The chain is Small ribosomal subunit protein uS15c (rps15) from Amborella trichopoda.